The sequence spans 170 residues: Small ribosomal subunit protein uS13 (170 aa).

Basic residues predominate over residues 128 to 140; the sequence is VRHKRGQKVRGQR. The interval 128 to 170 is disordered; that stretch reads VRHKRGQKVRGQRTKSTGRTEGTIGVNVEAIKEEQAEDGGDEE.

The protein belongs to the universal ribosomal protein uS13 family. Part of the 30S ribosomal subunit. Forms a loose heterodimer with protein S19. Forms two bridges to the 50S subunit in the 70S ribosome.

Located at the top of the head of the 30S subunit, it contacts several helices of the 16S rRNA. In the 70S ribosome it contacts the 23S rRNA (bridge B1a) and protein L5 of the 50S subunit (bridge B1b), connecting the 2 subunits; these bridges are implicated in subunit movement. This chain is Small ribosomal subunit protein uS13, found in Natronomonas pharaonis (strain ATCC 35678 / DSM 2160 / CIP 103997 / JCM 8858 / NBRC 14720 / NCIMB 2260 / Gabara) (Halobacterium pharaonis).